We begin with the raw amino-acid sequence, 246 residues long: Uridylate kinase (246 aa).

16 to 19 serves as a coordination point for ATP; that stretch reads KLGG. Glycine 57 provides a ligand contact to UMP. ATP is bound by residues glycine 58 and arginine 62. UMP contacts are provided by residues aspartate 77 and 138–145; that span reads MGMPYFST. ATP is bound by residues tyrosine 171 and aspartate 174.

It belongs to the UMP kinase family. In terms of assembly, homohexamer.

The protein localises to the cytoplasm. It catalyses the reaction UMP + ATP = UDP + ADP. Its pathway is pyrimidine metabolism; CTP biosynthesis via de novo pathway; UDP from UMP (UMPK route): step 1/1. Inhibited by UTP. In terms of biological role, catalyzes the reversible phosphorylation of UMP to UDP. This chain is Uridylate kinase, found in Corynebacterium jeikeium (strain K411).